The sequence spans 125 residues: Small ribosomal subunit protein uS13 (125 aa).

This sequence belongs to the universal ribosomal protein uS13 family. Part of the 30S ribosomal subunit. Forms a loose heterodimer with protein S19. Forms two bridges to the 50S subunit in the 70S ribosome.

Its function is as follows. Located at the top of the head of the 30S subunit, it contacts several helices of the 16S rRNA. In the 70S ribosome it contacts the 23S rRNA (bridge B1a) and protein L5 of the 50S subunit (bridge B1b), connecting the 2 subunits; these bridges are implicated in subunit movement. Contacts the tRNAs in the A and P-sites. The polypeptide is Small ribosomal subunit protein uS13 (Rickettsia akari (strain Hartford)).